The primary structure comprises 328 residues: DNA-directed RNA polymerase subunit alpha (328 aa).

The segment at 1–231 (MIYQMQMPEK…EHVSLFANFS (231 aa)) is alpha N-terminal domain (alpha-NTD). Residues 252 to 328 (MRKMLLTRIE…MDITKYQMKG (77 aa)) form an alpha C-terminal domain (alpha-CTD) region.

The protein belongs to the RNA polymerase alpha chain family. In terms of assembly, homodimer. The RNAP catalytic core consists of 2 alpha, 1 beta, 1 beta' and 1 omega subunit. When a sigma factor is associated with the core the holoenzyme is formed, which can initiate transcription.

The catalysed reaction is RNA(n) + a ribonucleoside 5'-triphosphate = RNA(n+1) + diphosphate. Its function is as follows. DNA-dependent RNA polymerase catalyzes the transcription of DNA into RNA using the four ribonucleoside triphosphates as substrates. The sequence is that of DNA-directed RNA polymerase subunit alpha from Chlorobium phaeobacteroides (strain BS1).